The sequence spans 319 residues: HTH-type transcriptional regulator YidZ (319 aa).

An HTH lysR-type domain is found at 8–65; it reads LDLNLLLCLQLLMQERSVTKAAKRINVTPSAVSKSLAKLRAWFDDPLFVNSPLGLSPT. The segment at residues 25–44 is a DNA-binding region (H-T-H motif); sequence VTKAAKRINVTPSAVSKSLA.

The protein belongs to the LysR transcriptional regulatory family.

In terms of biological role, involved in anaerobic NO protection. In Escherichia coli (strain K12 / MC4100 / BW2952), this protein is HTH-type transcriptional regulator YidZ.